Reading from the N-terminus, the 583-residue chain is MALLQTSLIWAVYAIVVAILAAVASVFIYTYQTPRDRCPSVILTCIVAVTTLLATVLLVPVDVALVSSTINPALGRRQDWATQSEVDRILLCLKIVYYFLYSLDALLCLIVIPFIYFLYEEYDEVASETEQQSFGQRFWAAFKYTVSFLAIVVVLFLVGFFVPVAKDGDGGGLDYFKHLLTENRGERALTFALGLLITIGLCLYVLYTSTGLALFPITLIKEGPSVISPTLKATTAVQLCSNRERQRQLEGRCRGNPGLLSSKDRRELDTLVREERTLIRRQRLADEAHGKHQNWLMQLWLKFGAIFRPFQLLSGVIFSLLALIIWISMLLTTIDKAKNSFCKQRCGYILGHINVFNPINWVFVQSAKIFPVDYVIFTLLVLFLFSSSIVGISAVGIRFLWIRIFQIRKGHTSPQALLLATAMLMLIILALNYSTSMILAPQYATYGPQTFCDRELSFSEKQPDCSRDKHLIRPCSEVADSLAAKQVCTPSVVSTFLNRVTMNFPFFGAIFFWAQFAFLGIYLLVMVTALLHSPKLDERQLDEDAEEAEEESLLANTRGRAETTWEDITSRLRRQNEVDRAGA.

Helical transmembrane passes span 8–28 (LIWA…SVFI), 41–61 (VILT…LVPV), 95–115 (IVYY…IPFI), 145–165 (TVSF…VPVA), 188–208 (ALTF…VLYT), 312–332 (LLSG…MLLT), 347–367 (GYIL…VQSA), 375–395 (VIFT…ISAV), 418–438 (LLAT…TSMI), and 506–526 (FFGA…LLVM). Positions 541 to 552 (LDEDAEEAEEES) are enriched in acidic residues. The disordered stretch occupies residues 541–562 (LDEDAEEAEEESLLANTRGRAE).

Belongs to the LIMR family. LMBRD1 subfamily.

It localises to the lysosome membrane. Probable lysosomal cobalamin transporter. Required to export cobalamin from lysosomes allowing its conversion to cofactors. The sequence is that of Probable lysosomal cobalamin transporter from Aspergillus oryzae (strain ATCC 42149 / RIB 40) (Yellow koji mold).